We begin with the raw amino-acid sequence, 120 residues long: NAD(P)H-quinone oxidoreductase subunit 3, chloroplastic (120 aa).

Transmembrane regions (helical) follow at residues 9-29 (IFWAFLIISSAIPILAFLISG), 64-84 (MFALVFVVFDVETVFLYPWAM), and 88-108 (VLGVSVFIEALIFVLILIVGS).

Belongs to the complex I subunit 3 family. NDH is composed of at least 16 different subunits, 5 of which are encoded in the nucleus.

The protein localises to the plastid. It is found in the chloroplast thylakoid membrane. The enzyme catalyses a plastoquinone + NADH + (n+1) H(+)(in) = a plastoquinol + NAD(+) + n H(+)(out). The catalysed reaction is a plastoquinone + NADPH + (n+1) H(+)(in) = a plastoquinol + NADP(+) + n H(+)(out). Functionally, NDH shuttles electrons from NAD(P)H:plastoquinone, via FMN and iron-sulfur (Fe-S) centers, to quinones in the photosynthetic chain and possibly in a chloroplast respiratory chain. The immediate electron acceptor for the enzyme in this species is believed to be plastoquinone. Couples the redox reaction to proton translocation, and thus conserves the redox energy in a proton gradient. This chain is NAD(P)H-quinone oxidoreductase subunit 3, chloroplastic, found in Carica papaya (Papaya).